Reading from the N-terminus, the 1961-residue chain is Ankyrin-3 (1961 aa).

The span at 1 to 10 (MSEEPKEKPA) shows a compositional bias: basic and acidic residues. The segment at 1-25 (MSEEPKEKPAKPAHRKRKGKKSDAN) is disordered. Residues 11–20 (KPAHRKRKGK) show a composition bias toward basic residues. A Phosphoserine modification is found at S22. 23 ANK repeats span residues 56–85 (NGLN…NVDA), 89–118 (KGNT…NVNA), 122–151 (NGFT…SQSL), 155–184 (DGFT…KGKV), 186–213 (LPAL…NADV), 217–246 (SGFT…AVDF), 250–279 (NDIT…KIDA), 283–312 (DGLT…PILS), 316–345 (NGLS…PVDD), 349–378 (DYLT…SPNA), 382–411 (NGFT…SIQA), 415–444 (SGLT…SPNT), 448–477 (RGET…QVEA), 481–510 (DDQT…SPNA), 514–543 (SGYT…SLSI), 547–576 (KGFT…SPDA), 580–609 (SGLT…SPHA), 613–642 (NGYT…DANA), 646–675 (QGIA…NVNL), 679–708 (SGLT…HVDA), 712–741 (MGYT…KVNA), 745–774 (NGYT…SPNE), and 778–807 (NGNT…EIMT). S606 is modified (phosphoserine). Phosphoserine is present on L732. 10 positions are modified to phosphoserine: S830, S844, S850, S873, S914, S917, S923, S958, S960, and S1114. 2 ZU5 domains span residues 985-1140 (FLVS…VVSR) and 1142-1289 (KQES…LADC). Residues 1274-1408 (VSFTTNVSAR…SIKIRDTSQE (135 aa)) form a UPA domain region. A phosphoserine mark is found at S1451, S1462, S1470, S1473, and G1560. Positions 1478 to 1562 (TDIRMAIVAD…DIVTLLEGPI (85 aa)) constitute a Death domain. Disordered stretches follow at residues 1606 to 1678 (PNPF…DPLD), 1698 to 1740 (SVPG…VTED), 1784 to 1818 (WQNE…DQAR), 1844 to 1884 (PEAK…PVSP), and 1915 to 1961 (MTRT…KKTH). Over residues 1725–1740 (QQEKGKSGPDEEVTED) the composition is skewed to basic and acidic residues. The span at 1784–1795 (WQNETPSGSLES) shows a compositional bias: polar residues. Phosphoserine occurs at positions 1795, 1813, and 1883. Basic and acidic residues predominate over residues 1808–1818 (DRLDDSSDQAR). The span at 1933–1961 (GSTRSEPKQGEGYKVKTKKEIRNVEKKTH) shows a compositional bias: basic and acidic residues.

In terms of assembly, may be a constituent of a NFASC/NRCAM/ankyrin G complex. Interacts with RHBG. Directly interacts with DMD and betaDAG1; this interaction does not interfere with DMD-binding and is required for DMD and betaDAG1 retention at costameres. Interacts (via N-terminal ANK repeats) with SCHIP1 isoform 7 (via C-terminus); this interaction is required for the localization at axon initial segments (AISs) and nodes of Ranvier (NRs). Interacts with PLEC and FLNC. Interacts with KCNA1; this inhibits channel activity. Interacts with SCN5A. Interacts with PKP2 and GJA1/CX43. In terms of tissue distribution, expressed in many epithelial tissues, muscles and axons. Expressed in kidney, brain, skin, lung, liver, intestine, pancreas, heart and testis (at protein level). In testis, expressed in Leydig cells, but very weakly or not at all in Sertoli cells or seminiferous tubules. Expressed in macrophages (at protein level).

It is found in the cytoplasm. The protein resides in the cytoskeleton. Its subcellular location is the cell projection. It localises to the axon. The protein localises to the cell membrane. It is found in the sarcolemma. The protein resides in the postsynaptic cell membrane. Its subcellular location is the lysosome. It localises to the T-tubule. Its function is as follows. Membrane-cytoskeleton linker. May participate in the maintenance/targeting of ion channels and cell adhesion molecules at the nodes of Ranvier and axonal initial segments. In skeletal muscle, required for costamere localization of DMD and betaDAG1. Regulates KCNA1 channel activity in function of dietary Mg(2+) levels, and thereby contributes to the regulation of renal Mg(2+) reabsorption. Required for intracellular adhesion and junctional conductance in myocytes, potentially via stabilization of GJA1/CX43 protein abundance and promotion of PKP2, GJA1/CX43, and SCN5A/Nav1.5 localization to cell-cell junctions. The protein is Ankyrin-3 (Ank3) of Mus musculus (Mouse).